The following is a 468-amino-acid chain: Chromosomal replication initiator protein DnaA (468 aa).

The segment at 1–84 (MSSSLWLQCL…RFEVGSKPIS (84 aa)) is domain I, interacts with DnaA modulators. The tract at residues 84–131 (SAPPRPQRTAADVAAATSAPAQMQARQSLHKPWESRGPEPVDDLNHRS) is domain II. Residues 112 to 132 (LHKPWESRGPEPVDDLNHRSN) are disordered. Over residues 114–129 (KPWESRGPEPVDDLNH) the composition is skewed to basic and acidic residues. Positions 132-348 (NVNPKHKFTN…GALNRVVANA (217 aa)) are domain III, AAA+ region. Residues G176, G178, K179, and T180 each contribute to the ATP site. A domain IV, binds dsDNA region spans residues 349–468 (NFTGRAITID…YSNLIRTLSS (120 aa)).

The protein belongs to the DnaA family. As to quaternary structure, oligomerizes as a right-handed, spiral filament on DNA at oriC.

The protein resides in the cytoplasm. Its function is as follows. Plays an essential role in the initiation and regulation of chromosomal replication. ATP-DnaA binds to the origin of replication (oriC) to initiate formation of the DNA replication initiation complex once per cell cycle. Binds the DnaA box (a 9 base pair repeat at the origin) and separates the double-stranded (ds)DNA. Forms a right-handed helical filament on oriC DNA; dsDNA binds to the exterior of the filament while single-stranded (ss)DNA is stabiized in the filament's interior. The ATP-DnaA-oriC complex binds and stabilizes one strand of the AT-rich DNA unwinding element (DUE), permitting loading of DNA polymerase. After initiation quickly degrades to an ADP-DnaA complex that is not apt for DNA replication. Binds acidic phospholipids. This chain is Chromosomal replication initiator protein DnaA, found in Aliivibrio salmonicida (strain LFI1238) (Vibrio salmonicida (strain LFI1238)).